We begin with the raw amino-acid sequence, 557 residues long: Dihydroxy-acid dehydratase (557 aa).

Position 78 (Asp78) interacts with Mg(2+). Cys119 is a [2Fe-2S] cluster binding site. Asp120 and Lys121 together coordinate Mg(2+). At Lys121 the chain carries N6-carboxylysine. Cys192 contacts [2Fe-2S] cluster. Glu442 serves as a coordination point for Mg(2+). Residue Ser468 is the Proton acceptor of the active site.

It belongs to the IlvD/Edd family. In terms of assembly, homodimer. [2Fe-2S] cluster is required as a cofactor. Requires Mg(2+) as cofactor.

The enzyme catalyses (2R)-2,3-dihydroxy-3-methylbutanoate = 3-methyl-2-oxobutanoate + H2O. The catalysed reaction is (2R,3R)-2,3-dihydroxy-3-methylpentanoate = (S)-3-methyl-2-oxopentanoate + H2O. It functions in the pathway amino-acid biosynthesis; L-isoleucine biosynthesis; L-isoleucine from 2-oxobutanoate: step 3/4. Its pathway is amino-acid biosynthesis; L-valine biosynthesis; L-valine from pyruvate: step 3/4. Its function is as follows. Functions in the biosynthesis of branched-chain amino acids. Catalyzes the dehydration of (2R,3R)-2,3-dihydroxy-3-methylpentanoate (2,3-dihydroxy-3-methylvalerate) into 2-oxo-3-methylpentanoate (2-oxo-3-methylvalerate) and of (2R)-2,3-dihydroxy-3-methylbutanoate (2,3-dihydroxyisovalerate) into 2-oxo-3-methylbutanoate (2-oxoisovalerate), the penultimate precursor to L-isoleucine and L-valine, respectively. This is Dihydroxy-acid dehydratase from Bacillus cereus (strain AH820).